The following is a 48-amino-acid chain: DNA-directed RNA polymerase subunit Rpo12 (48 aa).

Residues Cys6, Cys9, Cys26, and Cys29 each contribute to the Zn(2+) site.

This sequence belongs to the archaeal Rpo12/eukaryotic RPC10 RNA polymerase subunit family. In terms of assembly, part of the 13-subunit RNA polymerase. Zn(2+) serves as cofactor.

The protein resides in the cytoplasm. It catalyses the reaction RNA(n) + a ribonucleoside 5'-triphosphate = RNA(n+1) + diphosphate. Its function is as follows. DNA-dependent RNA polymerase (RNAP) catalyzes the transcription of DNA into RNA using the four ribonucleoside triphosphates as substrates. This chain is DNA-directed RNA polymerase subunit Rpo12, found in Sulfolobus acidocaldarius (strain ATCC 33909 / DSM 639 / JCM 8929 / NBRC 15157 / NCIMB 11770).